Here is a 308-residue protein sequence, read N- to C-terminus: Phosphatidate cytidylyltransferase (308 aa).

A run of 8 helical transmembrane segments spans residues 30-50 (FLVL…LGFI), 73-93 (PLST…FLSI), 100-120 (PGFF…WSIF), 127-147 (IGAL…GIPI), 167-187 (IWWA…GYFF), 205-225 (TVVG…IFFL), 235-255 (FPMP…GFFG), and 280-300 (MLDT…FLLI).

The protein belongs to the CDS family.

Its subcellular location is the cell membrane. It catalyses the reaction a 1,2-diacyl-sn-glycero-3-phosphate + CTP + H(+) = a CDP-1,2-diacyl-sn-glycerol + diphosphate. It participates in phospholipid metabolism; CDP-diacylglycerol biosynthesis; CDP-diacylglycerol from sn-glycerol 3-phosphate: step 3/3. The polypeptide is Phosphatidate cytidylyltransferase (cdsA) (Chlamydia pneumoniae (Chlamydophila pneumoniae)).